A 94-amino-acid chain; its full sequence is UPF0298 protein SZO_03600 (94 aa).

The protein belongs to the UPF0298 family.

It is found in the cytoplasm. This Streptococcus equi subsp. zooepidemicus (strain H70) protein is UPF0298 protein SZO_03600.